Consider the following 45-residue polypeptide: Photosystem II reaction center protein K (45 aa).

Residues 1-8 (MFSINFLG) constitute a propeptide that is removed on maturation. Residues 17–37 (FDPIVDVLPIIPLLFLLLAFV) form a helical membrane-spanning segment.

Belongs to the PsbK family. In terms of assembly, PSII is composed of 1 copy each of membrane proteins PsbA, PsbB, PsbC, PsbD, PsbE, PsbF, PsbH, PsbI, PsbJ, PsbK, PsbL, PsbM, PsbT, PsbY, PsbZ, Psb30/Ycf12, at least 3 peripheral proteins of the oxygen-evolving complex and a large number of cofactors. It forms dimeric complexes.

The protein localises to the plastid. It is found in the chloroplast thylakoid membrane. Its function is as follows. One of the components of the core complex of photosystem II (PSII). PSII is a light-driven water:plastoquinone oxidoreductase that uses light energy to abstract electrons from H(2)O, generating O(2) and a proton gradient subsequently used for ATP formation. It consists of a core antenna complex that captures photons, and an electron transfer chain that converts photonic excitation into a charge separation. In Euglena viridis (Cercaria viridis), this protein is Photosystem II reaction center protein K.